Reading from the N-terminus, the 391-residue chain is MAVKKRSIFEEVGQGAKAPVPQGGSIDRGHGGARRGIRLWLMALFLLVMAMIVVGGLTRLTDSGLSITEWRPVTGAVPPLNETQWAAEFDKYRDSPQYRLMNAGMTLAEFQRIYWWEWGHRQLGRVIGLVWAVGFLGFLAARRIPRGWWPRLLALGALGGLQGGIGWWMVASGLEGDKVTVESTRLATHLGLAFIILGLIAWQALLLGRSESDLLQARRQKDGRLVTLTTVLIGVAFLQIVLGALVAGIDAGRGFPTWPDMNGTFLPAEMFYVPGVETDWRNPAWWLGLLQNPGFVQFLHRMAGYTLAALGLIFWIFGRRSRHRATRGAFDLLAMALLAQILLGVGTVLSAAEWQVAIAHQVGAVVIWVLILHARHLALYPRVGSIRKGTL.

8 helical membrane passes run 37-57 (IRLW…VGGL), 121-141 (RQLG…FLAA), 152-172 (LLAL…MVAS), 186-206 (LATH…QALL), 229-249 (TTVL…VAGI), 298-318 (FLHR…WIFG), 332-352 (LLAM…LSAA), and 354-374 (WQVA…ILHA). A heme-binding site is contributed by H300. A heme-binding site is contributed by H360.

The protein belongs to the COX15/CtaA family. Type 2 subfamily. As to quaternary structure, interacts with CtaB. Heme b is required as a cofactor.

Its subcellular location is the cell membrane. The enzyme catalyses Fe(II)-heme o + 2 A + H2O = Fe(II)-heme a + 2 AH2. Its pathway is porphyrin-containing compound metabolism; heme A biosynthesis; heme A from heme O: step 1/1. Catalyzes the conversion of heme O to heme A by two successive hydroxylations of the methyl group at C8. The first hydroxylation forms heme I, the second hydroxylation results in an unstable dihydroxymethyl group, which spontaneously dehydrates, resulting in the formyl group of heme A. This Cereibacter sphaeroides (strain ATCC 17023 / DSM 158 / JCM 6121 / CCUG 31486 / LMG 2827 / NBRC 12203 / NCIMB 8253 / ATH 2.4.1.) (Rhodobacter sphaeroides) protein is Heme A synthase.